A 1673-amino-acid polypeptide reads, in one-letter code: MWRAEGKWLPKTSRKSVSQSVFCGTSTYCVLNTVPPIEDDHGNSNSSHVKIFLPKKLLECLPKCSSLPKERHRWNTNEEIAAYLITFEKHEEWLTTSPKTRPQNGSMILYNRKKVKYRKDGYCWKKRKDGKTTREDHMKLKVQGVECLYGCYVHSSIIPTFHRRCYWLLQNPDIVLVHYLNVPAIEDCGKPCGPILCSINTDKKEWAKWTKEELIGQLKPMFHGIKWTCSNGNSSSGFSVEQLVQQILDSHQTKPQPRTHNCLCTGSLGAGGSVHHKCNSAKHRIISPKVEPRTGGYGSHSEVQHNDVSEGKHEHSHSKGSSREKRNGKVAKPVLLHQSSTEVSSTNQVEVPDTTQSSPVSISSGLNSDPDMVDSPVVTGVSGMAVASVMGSLSQSATVFMSEVTNEAVYTMSPTAGPNHHLLSPDASQGLVLAVSSDGHKFAFPTTGSSESLSMLPTNVSEELVLSTTLDGGRKIPETTMNFDPDCFLNNPKQGQTYGGGGLKAEMVSSNIRHSPPGERSFSFTTVLTKEIKTEDTSFEQQMAKEAYSSSAAAVAASSLTLTAGSSLLPSGGGLSPSTTLEQMDFSAIDSNKDYTSSFSQTGHSPHIHQTPSPSFFLQDASKPLPVEQNTHSSLSDSGGTFVMPTVKTEASSQTSSCSGHVETRIESTSSLHLMQFQANFQAMTAEGEVTMETSQAAEGSEVLLKSGELQACSSEHYLQPETNGVIRSAGGVPILPGNVVQGLYPVAQPSLGNASNMELSLDHFDISFSNQFSDLINDFISVEGGSSTIYGHQLVSGDSTALSQSEDGARAPFTQAEMCLPCCSPQQGSLQLSSSEGGASTMAYMHVAEVVSAASAQGTLGMLQQSGRVFMVTDYSPEWSYPEGGVKVLITGPWQEASNNYSCLFDQISVPASLIQPGVLRCYCPAHDTGLVTLQVAFNNQIISNSVVFEYKARALPTLPSSQHDWLSLDDNQFRMSILERLEQMERRMAEMTGSQQHKQASGGGSSGGGSGSGNGGSQAQCASGTGALGSCFESRVVVVCEKMMSRACWAKSKHLIHSKTFRGMTLLHLAAAQGYATLIQTLIKWRTKHADSIDLELEVDPLNVDHFSCTPLMWACALGHLEAAVVLYKWDRRAISIPDSLGRLPLGIARSRGHVKLAECLEHLQRDEQAQLGQNPRIHCPASEEPSTESWMAQWHSEAISSPEIPKGVTVIASTNPELRRPRSEPSNYYSSESHKDYPAPKKHKLNPEYFQTRQEKLLPTALSLEEPNIRKQSPSSKQSVPETLSPSEGVRDFSRELSPPTPETAAFQASGSQPVGKWNSKDLYIGVSTVQVTGNPKGTSVGKEAAPSQVRPREPMSVLMMANREVVNTELGSYRDSAENEECGQPMDDIQVNMMTLAEHIIEATPDRIKQENFVPMESSGLERTDPATISSTMSWLASYLADADCLPSAAQIRSAYNEPLTPSSNTSLSPVGSPVSEIAFEKPNLPSAADWSEFLSASTSEKVENEFAQLTLSDHEQRELYEAARLVQTAFRKYKGRPLREQQEVAAAVIQRCYRKYKQYALYKKMTQAAILIQSKFRSYYEQKKFQQSRRAAVLIQKYYRSYKKCGKRRQARRTAVIVQQKLRSSLLTKKQDQAARKIMRFLRRCRHSPLVDHRLYKRSERIEKGQGT.

The CG-1 DNA-binding region spans 63–188 (KCSSLPKERH…YLNVPAIEDC (126 aa)). The Nuclear localization signal motif lies at 112–119 (RKKVKYRK). Residues 283–375 (HRIISPKVEP…LNSDPDMVDS (93 aa)) are disordered. Positions 302 to 313 (EVQHNDVSEGKH) are enriched in basic and acidic residues. Over residues 337–367 (HQSSTEVSSTNQVEVPDTTQSSPVSISSGLN) the composition is skewed to polar residues. The IPT/TIG domain maps to 875-953 (DYSPEWSYPE…ISNSVVFEYK (79 aa)). The interval 990-1021 (MAEMTGSQQHKQASGGGSSGGGSGSGNGGSQA) is disordered. Over residues 1003-1018 (SGGGSSGGGSGSGNGG) the composition is skewed to gly residues. ANK repeat units lie at residues 1064-1093 (RGMT…KHAD), 1109-1129 (FSCT…AVVL), and 1143-1172 (LGRL…DEQA). 2 disordered regions span residues 1215–1246 (ASTN…PKKH) and 1264–1317 (ALSL…GSQP). Residues 1273–1289 (RKQSPSSKQSVPETLSP) are compositionally biased toward polar residues. 3 consecutive IQ domains span residues 1547–1576 (QEVA…AAIL), 1577–1599 (IQSK…AAVL), and 1600–1622 (IQKY…TAVI).

Belongs to the CAMTA family. May interact with calmodulin. In terms of tissue distribution, normally expressed in non-neoplastic adult central nervous system tissues: detected in whole brain, cerebellum, brain cortex, occipital lobe, frontal lobe, temporal lobe, putamen. Expression levels are low in oligodendroglial tumors, and are reduced by half in oligodendroglioma and astrocytoma cases with 1p loss of heterozygosity. Detected in neuroblastic-type cultured neuroblastoma cells. Expressed in heart and kidney.

Its subcellular location is the nucleus. The protein localises to the cytoplasm. Functionally, transcriptional activator. This is Calmodulin-binding transcription activator 1 from Homo sapiens (Human).